Here is a 615-residue protein sequence, read N- to C-terminus: Extracellular metalloproteinase 1 (615 aa).

Residues 1–8 form the signal peptide; the sequence is SLPLHVLA. The propeptide occupies 9–235; the sequence is HPQPSTSTSL…VHNVVDYVAH (227 aa). N-linked (GlcNAc...) asparagine glycosylation occurs at asparagine 276. Histidine 419 serves as a coordination point for Zn(2+). The active site involves glutamate 420. Histidine 423 lines the Zn(2+) pocket. N-linked (GlcNAc...) asparagine glycans are attached at residues asparagine 464, asparagine 583, and asparagine 612.

The protein belongs to the peptidase M36 family. The cofactor is Zn(2+).

It is found in the secreted. Its function is as follows. Secreted metalloproteinase probably acting as a virulence factor. The protein is Extracellular metalloproteinase 1 (MEP1) of Trichophyton equinum (Horse ringworm fungus).